Here is a 641-residue protein sequence, read N- to C-terminus: 1-deoxy-D-xylulose-5-phosphate synthase (641 aa).

Thiamine diphosphate contacts are provided by residues His-71 and 112-114 (SHA). Position 144 (Asp-144) interacts with Mg(2+). Thiamine diphosphate contacts are provided by residues 145 to 146 (GA), Asn-173, Tyr-284, and Glu-365. A Mg(2+)-binding site is contributed by Asn-173.

Belongs to the transketolase family. DXPS subfamily. In terms of assembly, homodimer. The cofactor is Mg(2+). It depends on thiamine diphosphate as a cofactor.

The catalysed reaction is D-glyceraldehyde 3-phosphate + pyruvate + H(+) = 1-deoxy-D-xylulose 5-phosphate + CO2. The protein operates within metabolic intermediate biosynthesis; 1-deoxy-D-xylulose 5-phosphate biosynthesis; 1-deoxy-D-xylulose 5-phosphate from D-glyceraldehyde 3-phosphate and pyruvate: step 1/1. In terms of biological role, catalyzes the acyloin condensation reaction between C atoms 2 and 3 of pyruvate and glyceraldehyde 3-phosphate to yield 1-deoxy-D-xylulose-5-phosphate (DXP). This chain is 1-deoxy-D-xylulose-5-phosphate synthase, found in Mycolicibacterium paratuberculosis (strain ATCC BAA-968 / K-10) (Mycobacterium paratuberculosis).